Here is a 102-residue protein sequence, read N- to C-terminus: Small ribosomal subunit protein uS10 (102 aa).

This sequence belongs to the universal ribosomal protein uS10 family. Part of the 30S ribosomal subunit.

Involved in the binding of tRNA to the ribosomes. The chain is Small ribosomal subunit protein uS10 from Streptococcus pyogenes serotype M12 (strain MGAS2096).